The primary structure comprises 236 residues: Demethylmenaquinone methyltransferase (236 aa).

S-adenosyl-L-methionine contacts are provided by residues T58, D79, and N106–A107.

Belongs to the class I-like SAM-binding methyltransferase superfamily. MenG/UbiE family.

The enzyme catalyses a 2-demethylmenaquinol + S-adenosyl-L-methionine = a menaquinol + S-adenosyl-L-homocysteine + H(+). It participates in quinol/quinone metabolism; menaquinone biosynthesis; menaquinol from 1,4-dihydroxy-2-naphthoate: step 2/2. In terms of biological role, methyltransferase required for the conversion of demethylmenaquinol (DMKH2) to menaquinol (MKH2). This chain is Demethylmenaquinone methyltransferase, found in Listeria welshimeri serovar 6b (strain ATCC 35897 / DSM 20650 / CCUG 15529 / CIP 8149 / NCTC 11857 / SLCC 5334 / V8).